Consider the following 254-residue polypeptide: Phosphate import ATP-binding protein PstB (254 aa).

The region spanning 9–249 (MSVKDLDLFY…PVDKRTEDYI (241 aa)) is the ABC transporter domain. 41 to 48 (GPSGCGKS) serves as a coordination point for ATP.

Belongs to the ABC transporter superfamily. Phosphate importer (TC 3.A.1.7) family. In terms of assembly, the complex is composed of two ATP-binding proteins (PstB), two transmembrane proteins (PstC and PstA) and a solute-binding protein (PstS).

It localises to the cell membrane. It carries out the reaction phosphate(out) + ATP + H2O = ADP + 2 phosphate(in) + H(+). Functionally, part of the ABC transporter complex PstSACB involved in phosphate import. Responsible for energy coupling to the transport system. This is Phosphate import ATP-binding protein PstB from Clostridioides difficile (strain 630) (Peptoclostridium difficile).